Consider the following 82-residue polypeptide: Small ribosomal subunit protein bS20 (82 aa).

Residues 1–29 (MPNIKSAKKDLRRSRAAAVRNRAQRSALR) are disordered. The segment covering 16–29 (AAAVRNRAQRSALR) has biased composition (low complexity).

Belongs to the bacterial ribosomal protein bS20 family.

In terms of biological role, binds directly to 16S ribosomal RNA. The chain is Small ribosomal subunit protein bS20 from Gemmatimonas aurantiaca (strain DSM 14586 / JCM 11422 / NBRC 100505 / T-27).